The sequence spans 60 residues: Potassium channel toxin MeuTXKalpha3 (60 aa).

Residues M1–C22 form the signal peptide. Cystine bridges form between C32–C50, C37–C55, and C41–C57. A Proline amide modification is found at P59.

It belongs to the short scorpion toxin superfamily. Potassium channel inhibitor family. As to expression, expressed by the venom gland.

Its subcellular location is the secreted. In terms of biological role, may block voltage-gated potassium channels (Kv). The sequence is that of Potassium channel toxin MeuTXKalpha3 from Mesobuthus eupeus (Lesser Asian scorpion).